Consider the following 247-residue polypeptide: O-methyltransferase imqG (247 aa).

S-adenosyl-L-methionine is bound by residues Glu-84, 86–87 (GT), and Ala-138. Residues Asp-163, Asp-189, and Asn-190 each coordinate a divalent metal cation. Position 163 (Asp-163) interacts with substrate.

Belongs to the class I-like SAM-binding methyltransferase superfamily. Cation-dependent O-methyltransferase family. CCoAMT subfamily. In terms of assembly, homodimer. The cofactor is a divalent metal cation.

The protein operates within secondary metabolite biosynthesis. In terms of biological role, O-methyltransferase; part of the gene cluster that mediates the biosynthesis of imizoquins A to D, tripeptide-derived alkaloids that serve a protective role against oxidative stress that are essential for normal germination. ImqB is a canonical three-module NRPS that assembles the tripeptide backbone of the imizoquins via condensation of Trp, Tyr, and Leu-derived precursors. N-methylation by imqF and phenol oxidation by imqC, followed by cyclization via the FAD-dependent oxidase imqH carry out the three-step transformation of L-tyrosine into tetrahydroisoquinoline. Importantly, this sequence requires the presence of a free amine in the tyrosine moiety, indicating that isoquinoline formation occurs prior to peptide bond formation. The imidazolidin-4-one ring of imizoquins could form following additional oxidation of the methyl-derived bridgehead carbon by imqH. Lastly, O-methylation by imqG and leucine hydroxylation by imqE complete biosynthesis of the imizoquins. In Aspergillus flavus (strain ATCC 200026 / FGSC A1120 / IAM 13836 / NRRL 3357 / JCM 12722 / SRRC 167), this protein is O-methyltransferase imqG.